The primary structure comprises 780 residues: B3 domain-containing transcription repressor VAL2 (780 aa).

The TF-B3 DNA-binding region spans 286 to 387; the sequence is FEKVLSASDA…KLVMGYRKAT (102 aa). Residues 515–565 form a CW-type zinc finger; that stretch reads TGEQEQWVQCDACGKWRQLPVDILLPPKWSCSDNLLDPGRSSCSAPDELSP. Residues Cys524, Cys527, Cys545, and Cys557 each contribute to the Zn(2+) site. 3 disordered regions span residues 577–608, 669–695, and 743–780; these read EFKR…AGIT, KRNK…TEVE, and NTAG…DPVN. The segment covering 584–603 has biased composition (polar residues); that stretch reads ASSNEKLNQSQDASALNSLG. Low complexity predominate over residues 674–686; that stretch reads EAGQASQQAQSQS. Polar residues predominate over residues 743 to 765; that stretch reads NTAGEQQSSDMVSTEHGSSSAAQ.

The protein resides in the nucleus. Transcriptional repressor of gene expression involved in embryonic pathways, such as LEC1, ABI3, and FUS3. Repressor of the sugar-inducible genes involved in the seed maturation program in seedlings. Plays an essential role in regulating the transition from seed maturation to seedling growth. Functionally redundant with VAL1/HSI2. The protein is B3 domain-containing transcription repressor VAL2 (VAL2) of Arabidopsis thaliana (Mouse-ear cress).